The chain runs to 120 residues: Holo-[acyl-carrier-protein] synthase (120 aa).

2 residues coordinate Mg(2+): Asp6 and Glu55.

This sequence belongs to the P-Pant transferase superfamily. AcpS family. Requires Mg(2+) as cofactor.

Its subcellular location is the cytoplasm. It catalyses the reaction apo-[ACP] + CoA = holo-[ACP] + adenosine 3',5'-bisphosphate + H(+). Functionally, transfers the 4'-phosphopantetheine moiety from coenzyme A to a Ser of acyl-carrier-protein. This chain is Holo-[acyl-carrier-protein] synthase, found in Pelodictyon phaeoclathratiforme (strain DSM 5477 / BU-1).